Reading from the N-terminus, the 603-residue chain is Arginine--tRNA ligase (603 aa).

The 'HIGH' region motif lies at 143 to 153 (PNIAKEMHVGH).

The protein belongs to the class-I aminoacyl-tRNA synthetase family. As to quaternary structure, monomer.

It is found in the cytoplasm. It carries out the reaction tRNA(Arg) + L-arginine + ATP = L-arginyl-tRNA(Arg) + AMP + diphosphate. The sequence is that of Arginine--tRNA ligase from Prochlorococcus marinus (strain MIT 9303).